Reading from the N-terminus, the 646-residue chain is RNase E specificity factor CsrD (646 aa).

2 helical membrane passes run 10 to 30 (FVTL…SLSF) and 135 to 155 (MTTA…FLAV). The segment at 152–219 (FLAVRWLQRQ…REQHSRLDTL (68 aa)) is HAMP-like. A coiled-coil region spans residues 194–224 (RTSSALDTLLREIQNAREQHSRLDTLIRSYA). The GGDEF domain maps to 254–387 (THGIVMMIRL…GGNSWAIYDD (134 aa)). The EAL domain occupies 396-644 (NVRWRTLIEQ…TNVKKYSQRY (249 aa)).

It localises to the cell membrane. Functionally, serves as a specificity factor required for RNase E-mediated decay of the small global regulatory RNAs CsrB and CsrC, it is probably not a nuclease. Nor does its activity involve c-di-GMP, despite its domain composition. Positively modulates motility gene expression, is also required for curli expression. The polypeptide is RNase E specificity factor CsrD (csrD) (Escherichia coli (strain K12)).